The following is a 305-amino-acid chain: Aspartate carbamoyltransferase catalytic subunit (305 aa).

Residues arginine 54 and threonine 55 each contribute to the carbamoyl phosphate site. Lysine 83 contacts L-aspartate. Carbamoyl phosphate-binding residues include arginine 104, histidine 132, and glutamine 135. L-aspartate-binding residues include arginine 165 and arginine 226. The carbamoyl phosphate site is built by leucine 265 and proline 266.

It belongs to the aspartate/ornithine carbamoyltransferase superfamily. ATCase family. As to quaternary structure, heterooligomer of catalytic and regulatory chains.

It catalyses the reaction carbamoyl phosphate + L-aspartate = N-carbamoyl-L-aspartate + phosphate + H(+). The protein operates within pyrimidine metabolism; UMP biosynthesis via de novo pathway; (S)-dihydroorotate from bicarbonate: step 2/3. Functionally, catalyzes the condensation of carbamoyl phosphate and aspartate to form carbamoyl aspartate and inorganic phosphate, the committed step in the de novo pyrimidine nucleotide biosynthesis pathway. This Pyrobaculum arsenaticum (strain DSM 13514 / JCM 11321 / PZ6) protein is Aspartate carbamoyltransferase catalytic subunit.